The chain runs to 260 residues: Neuraminyllactose-binding hemagglutinin (260 aa).

The signal sequence occupies residues 1 to 27; sequence MRANNHFKDFAWKKCLLGASVVALLVG. Cys28 carries the N-palmitoyl cysteine lipid modification. A lipid anchor (S-diacylglycerol cysteine) is attached at Cys28. Positions 134–139 are N-acetyl-neuraminyl-alpha(2,3)-lactose binding motif; the sequence is KRTIQK.

The protein localises to the cell outer membrane. The protein is Neuraminyllactose-binding hemagglutinin (hpaA) of Helicobacter pylori (Campylobacter pylori).